Consider the following 282-residue polypeptide: NH(3)-dependent NAD(+) synthetase (282 aa).

Residue 51-58 (GISGGVDS) coordinates ATP. Residue D57 participates in Mg(2+) binding. A deamido-NAD(+)-binding site is contributed by R148. T168 lines the ATP pocket. Position 173 (E173) interacts with Mg(2+). Deamido-NAD(+)-binding residues include K181 and D188. 2 residues coordinate ATP: K197 and T219. Residue 268–269 (HK) coordinates deamido-NAD(+).

Belongs to the NAD synthetase family. In terms of assembly, homodimer.

It carries out the reaction deamido-NAD(+) + NH4(+) + ATP = AMP + diphosphate + NAD(+) + H(+). It participates in cofactor biosynthesis; NAD(+) biosynthesis; NAD(+) from deamido-NAD(+) (ammonia route): step 1/1. In terms of biological role, catalyzes the ATP-dependent amidation of deamido-NAD to form NAD. Uses ammonia as a nitrogen source. This Burkholderia cenocepacia (strain HI2424) protein is NH(3)-dependent NAD(+) synthetase.